A 108-amino-acid chain; its full sequence is DNA-directed RNA polymerase III subunit RPC10 (108 aa).

Residues Cys-5, Cys-8, Cys-25, Cys-28, Cys-69, and Cys-72 each coordinate Zn(2+). The C4-type zinc-finger motif lies at 5–28; that stretch reads CPGCGNGLIVEEGQRCHRFACNTC. The TFIIS-type zinc-finger motif lies at 65–107; that stretch reads TAEPCPKCEHPRAYFMQLQTRSADEPMTTFYKCCNAQCGHRWR. Positions 88-89 match the Hairpin motif; the sequence is DE. Zn(2+) contacts are provided by Cys-98 and Cys-102.

It belongs to the archaeal RpoM/eukaryotic RPA12/RPB9/RPC11 RNA polymerase family. As to quaternary structure, component of the RNA polymerase III complex consisting of 17 subunits: a ten-subunit horseshoe-shaped catalytic core composed of POLR3A/RPC1, POLR3B/RPC2, POLR1C/RPAC1, POLR1D/RPAC2, POLR3K/RPC10, POLR2E/RPABC1, POLR2F/RPABC2, POLR2H/RPABC3, POLR2K/RPABC4 and POLR2L/RPABC5; a mobile stalk composed of two subunits POLR3H/RPC8 and CRCP/RPC9, protruding from the core and functioning primarily in transcription initiation; and additional subunits homologous to general transcription factors of the RNA polymerase II machinery, POLR3C/RPC3-POLR3F/RPC6-POLR3G/RPC7 heterotrimer required for transcription initiation and POLR3D/RPC4-POLR3E/RPC5 heterodimer involved in both transcription initiation and termination.

The protein resides in the nucleus. In terms of biological role, core component of RNA polymerase III (Pol III) which synthesizes small non-coding RNAs using the four ribonucleoside triphosphates as substrates. Can mediate Pol I proofreading of the nascent RNA transcript. Anchors into the Pol III active site to constantly monitor transcription fidelity, cleaves mis-incorporated 5'-ribonucleotides and restarts the transcription process. Once Pol III reaches the poly(dT) termination signal, can induce Pol III clamp opening and transcription termination. Pol III plays an important role in sensing and limiting infection by intracellular bacteria and DNA viruses. Acts as a nuclear and cytosolic DNA sensor involved in innate immune response. Can sense non-self dsDNA that serves as template for transcription into dsRNA. The non-self RNA polymerase III transcripts, such as Epstein-Barr virus-encoded RNAs (EBERs) induce type I interferon and NF-kappa-B through the RIG-I pathway. The sequence is that of DNA-directed RNA polymerase III subunit RPC10 from Mus musculus (Mouse).